The chain runs to 110 residues: Keratin, type I cytoskeletal 19 (110 aa).

The head stretch occupies residues 1–8; sequence FGSGGVFR. Ser-3 is modified (phosphoserine). Residues 7 to 110 enclose the IF rod domain; sequence FRITMQNLND…KLEQEIATYR (104 aa). Arg-8 bears the Omega-N-methylarginine mark. Positions 9–42 are coil 1A; sequence ITMQNLNDRLASYLDKVRALEQANGELEVKIRDW. Residues 43-45 are linker 1; sequence YQK. Residues 46 to 83 form a coil 1B region; the sequence is IVLQIDNARTKFETEQALRVLDELTLARKNHEEEISAL. The interval 85–110 is coil 2; that stretch reads ADTERQNQEYQQLMDIKLEQEIATYR. A necessary for interaction with PNN region spans residues 85–110; the sequence is ADTERQNQEYQQLMDIKLEQEIATYR.

The protein belongs to the intermediate filament family. Heterotetramer of two type I and two type II keratins. Interacts with PNN and the actin-binding domain of DMD.

Its function is as follows. Involved in the organization of myofibers. Together with KRT8, helps to link the contractile apparatus to dystrophin at the costameres of striated muscle. This chain is Keratin, type I cytoskeletal 19, found in Mesocricetus auratus (Golden hamster).